Consider the following 575-residue polypeptide: Eukaryotic translation initiation factor 3 subunit D (575 aa).

Disordered stretches follow at residues 36 to 66 (PYSK…YGNR) and 103 to 177 (STRT…DASV). The segment covering 39 to 59 (KGDKLGRMADWTEGKDRERGG) has biased composition (basic and acidic residues). The span at 109–144 (FGRGGGTVFGRGRGQRGGQAQRGGRGTFQRVGGRGG) shows a compositional bias: gly residues. Residues 163–174 (GWRDDKPQRNRD) are compositionally biased toward basic and acidic residues. Residues 302 to 316 (NLDMVTVNENAADAP) are RNA gate.

This sequence belongs to the eIF-3 subunit D family. Component of the eukaryotic translation initiation factor 3 (eIF-3) complex.

The protein localises to the cytoplasm. MRNA cap-binding component of the eukaryotic translation initiation factor 3 (eIF-3) complex, which is involved in protein synthesis of a specialized repertoire of mRNAs and, together with other initiation factors, stimulates binding of mRNA and methionyl-tRNAi to the 40S ribosome. The eIF-3 complex specifically targets and initiates translation of a subset of mRNAs involved in cell proliferation. In the eIF-3 complex, eif3d specifically recognizes and binds the 7-methylguanosine cap of a subset of mRNAs. This chain is Eukaryotic translation initiation factor 3 subunit D, found in Phaeosphaeria nodorum (strain SN15 / ATCC MYA-4574 / FGSC 10173) (Glume blotch fungus).